The sequence spans 175 residues: Endoribonuclease YbeY (175 aa).

Zn(2+) contacts are provided by histidine 137, histidine 141, and histidine 147.

The protein belongs to the endoribonuclease YbeY family. Requires Zn(2+) as cofactor.

The protein resides in the cytoplasm. Single strand-specific metallo-endoribonuclease involved in late-stage 70S ribosome quality control and in maturation of the 3' terminus of the 16S rRNA. This Burkholderia ambifaria (strain ATCC BAA-244 / DSM 16087 / CCUG 44356 / LMG 19182 / AMMD) (Burkholderia cepacia (strain AMMD)) protein is Endoribonuclease YbeY.